Consider the following 171-residue polypeptide: Shikimate kinase (171 aa).

14-19 is an ATP binding site; sequence GAGKST. Position 18 (serine 18) interacts with Mg(2+). Residues aspartate 36, arginine 60, and glycine 82 each coordinate substrate. Arginine 120 serves as a coordination point for ATP. Arginine 139 lines the substrate pocket. Glutamine 156 provides a ligand contact to ATP.

The protein belongs to the shikimate kinase family. As to quaternary structure, monomer. Requires Mg(2+) as cofactor.

Its subcellular location is the cytoplasm. The catalysed reaction is shikimate + ATP = 3-phosphoshikimate + ADP + H(+). The protein operates within metabolic intermediate biosynthesis; chorismate biosynthesis; chorismate from D-erythrose 4-phosphate and phosphoenolpyruvate: step 5/7. Catalyzes the specific phosphorylation of the 3-hydroxyl group of shikimic acid using ATP as a cosubstrate. The polypeptide is Shikimate kinase (Shewanella denitrificans (strain OS217 / ATCC BAA-1090 / DSM 15013)).